Reading from the N-terminus, the 341-residue chain is Uroporphyrinogen decarboxylase (341 aa).

Residues 23-27 (RQAGR), aspartate 73, tyrosine 147, serine 202, and histidine 318 each bind substrate.

It belongs to the uroporphyrinogen decarboxylase family. In terms of assembly, homodimer.

The protein resides in the cytoplasm. The enzyme catalyses uroporphyrinogen III + 4 H(+) = coproporphyrinogen III + 4 CO2. It participates in porphyrin-containing compound metabolism; protoporphyrin-IX biosynthesis; coproporphyrinogen-III from 5-aminolevulinate: step 4/4. In terms of biological role, catalyzes the decarboxylation of four acetate groups of uroporphyrinogen-III to yield coproporphyrinogen-III. This chain is Uroporphyrinogen decarboxylase, found in Novosphingobium aromaticivorans (strain ATCC 700278 / DSM 12444 / CCUG 56034 / CIP 105152 / NBRC 16084 / F199).